The sequence spans 540 residues: MTAMKAIVWRLPKMPKIKITKTYEVTKITAILTLVGFIMGLEVPSLATFLTNKTFNEYFKYPTPLQQGLLMGSTPLGGIMGCFICCIMNDRFSRIYQFQSGIIIWNIVTLLNFCIWDILGLLICRMIKGMILGNFSILVASYANEVIPRGKRGSTMSYIQLCLTIGILVMHYLCIALSLWDSHFAFRIAWCIGIIPGLLFWMASYALPESYHWLVLHGKMSEAQEIQHNLAKKFNESQPRDAVPEMSKIELAGDFWIGVNDLDFSKKLPRGSFKPLILGMTLQLLVQFSGINIILGYITYICEIVGLEGNVKLFTSSIPYFINMVLSLLPITFIDYTSRKLITLLGGFPISGLLITIGALFVKYGQDTKPIDGNRSLVWSIGENPFVGGWILTLCFLIVGIFAMSLSSIPWVYTNEMLPSRVKVKGFAICVTFGWLGNFILTFLCPVMIERLKGTTFIIFGSLTFLISLSVLIWFPETKGMSIEDIDKFFEFESKEGTNLHGEKGIKTPDSNSNGGSTRSSQEGQLHKPIKLKSDEEMII.

Over methionine 1–threonine 29 the chain is Cytoplasmic. The helical transmembrane segment at alanine 30–leucine 50 threads the bilayer. The Extracellular segment spans residues threonine 51–glutamine 67. Asparagine 52 carries N-linked (GlcNAc...) asparagine glycosylation. The helical transmembrane segment at glycine 68–methionine 88 threads the bilayer. Topologically, residues asparagine 89 to glycine 101 are cytoplasmic. The helical transmembrane segment at isoleucine 102 to leucine 122 threads the bilayer. The Extracellular segment spans residues isoleucine 123–methionine 126. A helical transmembrane segment spans residues isoleucine 127–isoleucine 147. The Cytoplasmic segment spans residues proline 148–tyrosine 158. The chain crosses the membrane as a helical span at residues isoleucine 159–leucine 179. At tryptophan 180–arginine 187 the chain is on the extracellular side. Residues isoleucine 188–proline 208 traverse the membrane as a helical segment. Over glutamate 209 to proline 275 the chain is Cytoplasmic. A helical transmembrane segment spans residues leucine 276 to glycine 296. The Extracellular segment spans residues tyrosine 297–leucine 313. The helical transmembrane segment at phenylalanine 314–isoleucine 334 threads the bilayer. Residues aspartate 335–leucine 341 are Cytoplasmic-facing. Residues isoleucine 342–valine 362 form a helical membrane-spanning segment. Residues lysine 363–proline 385 are Extracellular-facing. N-linked (GlcNAc...) asparagine glycosylation occurs at asparagine 374. A helical membrane pass occupies residues phenylalanine 386–leucine 406. Residues serine 407 to alanine 428 are Cytoplasmic-facing. The chain crosses the membrane as a helical span at residues isoleucine 429 to isoleucine 449. Residues glutamate 450–threonine 455 are Extracellular-facing. The helical transmembrane segment at threonine 456–proline 476 threads the bilayer. At glutamate 477 to isoleucine 540 the chain is on the cytoplasmic side. The interval asparagine 499–isoleucine 540 is disordered. Positions proline 509 to glycine 524 are enriched in polar residues.

Belongs to the major facilitator superfamily. Sugar transporter (TC 2.A.1.1) family.

It is found in the membrane. In Saccharomyces cerevisiae (strain ATCC 204508 / S288c) (Baker's yeast), this protein is Probable metabolite transport protein YFL040W.